The following is a 2266-amino-acid chain: RNA1 polyprotein (2266 aa).

The Cytoplasmic portion of the chain corresponds to 566–1158 (LCTALAAGIF…AGRDYLVQNG (593 aa)). The SF3 helicase domain maps to 751–917 (MKDLVELHKR…PGVIYDPENP (167 aa)). 781–788 (GQRHCGKS) is an ATP binding site. Residues 1159–1179 (CGILMIAAALILILVSGWGFW) traverse the membrane as a helical segment. Over 1180 to 1205 (KLFVGLFSGTMSLGAAITGMSAVDIK) the chain is Lumenal. Positions 1229-1438 (AYARSQAGDG…WADIMPPNSL (210 aa)) constitute a Peptidase C3 domain. Catalysis depends on for picornain 3C-like protease activity residues H1272, E1310, and C1402. Positions 1715 to 1843 (NEAINCDYSG…SVSPSIASWF (129 aa)) constitute a RdRp catalytic domain.

The protein belongs to the nepoviruses RNA1 polyprotein family. In terms of processing, specific enzymatic cleavages by picornain 3C-like protease in vivo yield mature proteins. Picornain 3C-like protease is autocatalytically processed. VPg is uridylylated by the polymerase and is covalently linked to the 5'-end of genomic RNA. This uridylylated form acts as a nucleotide-peptide primer for the polymerase.

Its subcellular location is the host endoplasmic reticulum lumen. It is found in the host endoplasmic reticulum membrane. The enzyme catalyses RNA(n) + a ribonucleoside 5'-triphosphate = RNA(n+1) + diphosphate. Functionally, picornain 3C-like protease is a thiol protease that cleaves the P1 and P2 polyproteins. The protein is RNA1 polyprotein of Tomato black ring virus (strain MJ) (TBRV).